We begin with the raw amino-acid sequence, 314 residues long: MRIGIVVDSACDLPQDFIQRNNVIVLPISVRIGEAVLADHRDEEATLSFLHAHVAERGHEAETTPFSVNQIRDLFLQRLVIDYDHVFCLTISKLRSQIFDNATQASFAILNDYKPVRQAAGHTSPFALRVIDTLNLFAGQGITAVEAVRLRAQGLGVAPIRARLEQLAEHTYGYMIPRDLYYLRARARTKGDRSVGLIGAALGSALDIKPVLRAYRGVTEPVAKLKGFEPSAEKLFAFTVRKLREGLMTPTVCVGYGGELAELHALPGYAALQAACQTQGVELFESVMSLTGMVNVGKGALAVAFAAEPHSFSA.

Positions 3-307 (IGIVVDSACD…KGALAVAFAA (305 aa)) constitute a DegV domain. Positions 63 and 96 each coordinate hexadecanoate.

In terms of biological role, may bind long-chain fatty acids, such as palmitate, and may play a role in lipid transport or fatty acid metabolism. The chain is DegV domain-containing protein XCC3382 from Xanthomonas campestris pv. campestris (strain ATCC 33913 / DSM 3586 / NCPPB 528 / LMG 568 / P 25).